The following is a 202-amino-acid chain: Ribonuclease HII (202 aa).

Residues 18-202 (GQYAGVDEVG…KSFRPVREAM (185 aa)) enclose the RNase H type-2 domain. A divalent metal cation-binding residues include D24, E25, and D116.

This sequence belongs to the RNase HII family. Mn(2+) is required as a cofactor. Mg(2+) serves as cofactor.

The protein localises to the cytoplasm. It catalyses the reaction Endonucleolytic cleavage to 5'-phosphomonoester.. Its function is as follows. Endonuclease that specifically degrades the RNA of RNA-DNA hybrids. The chain is Ribonuclease HII from Shewanella piezotolerans (strain WP3 / JCM 13877).